The primary structure comprises 391 residues: Serine acetyltransferase 3, mitochondrial (391 aa).

2 disordered regions span residues lysine 40–glutamate 82 and valine 353–leucine 375. The segment covering serine 45–methionine 56 has biased composition (pro residues).

It belongs to the transferase hexapeptide repeat family. In terms of assembly, homomultimer. Interacts with OASC. Component of the cysteine synthase complex (CSC) composed of two OAS-TL dimers and one SAT hexamer. Ubiquitous with higher levels in leaves and siliques. Localized in vascular tissues, particularly in phloem.

The protein localises to the mitochondrion. It catalyses the reaction L-serine + acetyl-CoA = O-acetyl-L-serine + CoA. The protein operates within amino-acid biosynthesis; L-cysteine biosynthesis; L-cysteine from L-serine: step 1/2. The chain is Serine acetyltransferase 3, mitochondrial (SAT3) from Arabidopsis thaliana (Mouse-ear cress).